The sequence spans 256 residues: MLKFVILLCSIAYVFGAVVPLGMLSQSDGRIVGGVESKIEDFPWQISLQRDGRHYCGGSIYSKNVIITAAHCLRNVVAEELRVRVGSSYWEHGGSLRNISKFQIHESYVEPTKEYDVALLKLDSDLSFNSTIKAIELTNEIPPEYADAIVSGWGETLVPPPGIPDQLRSVDVKIIHREKCASRNFGYGSNIKASMICAYAIGKDSCQGDSGGPLVVNNLLVGVVSWGIDCARPSYPGVYVDVSHVRSLIVSNAESI.

Positions 1 to 22 (MLKFVILLCSIAYVFGAVVPLG) are cleaved as a signal peptide. The propeptide at 23–30 (MLSQSDGR) is activation peptide. The region spanning 31 to 254 (IVGGVESKIE…VRSLIVSNAE (224 aa)) is the Peptidase S1 domain. A disulfide bridge links cysteine 56 with cysteine 72. Catalysis depends on charge relay system residues histidine 71 and aspartate 116. Intrachain disulfides connect cysteine 180/cysteine 197 and cysteine 206/cysteine 230. The active-site Charge relay system is serine 210.

It belongs to the peptidase S1 family.

Its subcellular location is the secreted. Its function is as follows. Specificity, limited to carboxyl side of arginine residue in B-chain of insulin. The sequence is that of Hypodermin-A from Hypoderma lineatum (Early cattle grub).